The chain runs to 71 residues: DNA-directed RNA polymerase subunit omega (71 aa).

Belongs to the RNA polymerase subunit omega family. In terms of assembly, the RNAP catalytic core consists of 2 alpha, 1 beta, 1 beta' and 1 omega subunit. When a sigma factor is associated with the core the holoenzyme is formed, which can initiate transcription.

It catalyses the reaction RNA(n) + a ribonucleoside 5'-triphosphate = RNA(n+1) + diphosphate. Promotes RNA polymerase assembly. Latches the N- and C-terminal regions of the beta' subunit thereby facilitating its interaction with the beta and alpha subunits. The polypeptide is DNA-directed RNA polymerase subunit omega (Levilactobacillus brevis (strain ATCC 367 / BCRC 12310 / CIP 105137 / JCM 1170 / LMG 11437 / NCIMB 947 / NCTC 947) (Lactobacillus brevis)).